The primary structure comprises 185 residues: Gastrokine-1 (185 aa).

The N-terminal stretch at 1–20 (MKFTIVFAGLLGVFLAPALA) is a signal peptide. One can recognise a BRICHOS domain in the interval 54–150 (NNGWDSWNSI…MCRGIPTYMA (97 aa)). Cys-81 and Cys-142 form a disulfide bridge.

It belongs to the gastrokine family. As to expression, expressed in stomach (at protein level). No expression is detected in cancer tissue or gastric cancer cell lines.

The protein localises to the secreted. The protein resides in the cytoplasmic granule. It is found in the golgi apparatus. Functionally, has mitogenic activity and may be involved in maintaining the integrity of the gastric mucosal epithelium. The chain is Gastrokine-1 (GKN1) from Homo sapiens (Human).